Consider the following 86-residue polypeptide: uncharacterized protein (86 aa).

Residues 63 to 85 (VGGRSPSIQNSFFFFFFFFFFFF) form a helical membrane-spanning segment.

It is found in the membrane. This is an uncharacterized protein from Dictyostelium discoideum (Social amoeba).